A 1231-amino-acid chain; its full sequence is uncharacterized protein (1231 aa).

Disordered stretches follow at residues 171 to 197, 210 to 259, and 389 to 547; these read LKPD…QHDD, DESF…HLPT, and ASPR…RSSR. Positions 440–450 are enriched in basic residues; the sequence is RSRHSHKRRSI. Phosphoserine occurs at positions 449, 451, 453, and 455. Basic residues predominate over residues 458-502; the sequence is RGGRRAVRRSRSRSPRRSYNRGSTRSRSRSMRHRSRSPAHYRGRG. Over residues 503-541 the composition is skewed to basic and acidic residues; the sequence is RGREPASKERGSSSRDFGGRHSLQRERERSSEYYHRNEG. At Tyr-549 the chain carries Phosphotyrosine. Disordered regions lie at residues 570–591, 950–981, and 1058–1203; these read KTSS…ASEP, PNLD…DDEE, and TLSK…PPFN. Phosphoserine occurs at positions 573 and 589. Thr-970 is subject to Phosphothreonine. Residue Ser-972 is modified to Phosphoserine. Polar residues predominate over residues 1076–1103; the sequence is YMMNQQHGAPNAQNAPNLGQNPGQNLGQ. The span at 1118 to 1127 shows a compositional bias: low complexity; the sequence is QQQQQQQQQQ. Positions 1178 to 1203 are enriched in pro residues; that stretch reads PPGPGGYVGPPPNPWASNVPPQPPFN.

This is an uncharacterized protein from Drosophila melanogaster (Fruit fly).